The following is a 151-amino-acid chain: Putative phosphatidylglycerol/phosphatidylinositol transfer protein 3 (151 aa).

A signal peptide spans 1 to 26 (MKYSQNQIVYVIFFFIILIVVKPIES).

It belongs to the NPC2 family. In terms of assembly, monomer.

In terms of biological role, catalyzes the intermembrane transfer of phosphatidylglycerol and phosphatidylinositol. This Dictyostelium discoideum (Social amoeba) protein is Putative phosphatidylglycerol/phosphatidylinositol transfer protein 3.